Here is a 424-residue protein sequence, read N- to C-terminus: Glutamate-1-semialdehyde 2,1-aminomutase (424 aa).

Lysine 263 bears the N6-(pyridoxal phosphate)lysine mark.

It belongs to the class-III pyridoxal-phosphate-dependent aminotransferase family. HemL subfamily. In terms of assembly, homodimer. Pyridoxal 5'-phosphate serves as cofactor.

Its subcellular location is the cytoplasm. The catalysed reaction is (S)-4-amino-5-oxopentanoate = 5-aminolevulinate. Its pathway is porphyrin-containing compound metabolism; protoporphyrin-IX biosynthesis; 5-aminolevulinate from L-glutamyl-tRNA(Glu): step 2/2. This Campylobacter jejuni subsp. jejuni serotype O:2 (strain ATCC 700819 / NCTC 11168) protein is Glutamate-1-semialdehyde 2,1-aminomutase.